We begin with the raw amino-acid sequence, 440 residues long: Transposon Ty1-ML1 Gag polyprotein (440 aa).

Composition is skewed to polar residues over residues 1-23, 48-60, and 127-152; these read MESQ…SVTS, TKAN…TPAS, and QSQF…GNTF. Disordered regions lie at residues 1–88, 126–173, and 352–440; these read MESQ…YPQQ, PQSQ…RPPP, and GSRN…PETY. The segment covering 153–165 has biased composition (low complexity); that stretch reads TDSSSADSDMTST. Residues 299 to 401 are RNA-binding; that stretch reads NNGIHINNKV…NSKSKTARAH (103 aa). Low complexity predominate over residues 402-418; it reads NVSTSNNSPSTDNDSIS. Ser-416 carries the post-translational modification Phosphoserine. A compositionally biased stretch (polar residues) spans 419-428; the sequence is KSTTEPIQLN. Over residues 429–440 the composition is skewed to basic and acidic residues; it reads NKHDLHLRPETY.

In terms of assembly, homotrimer.

It localises to the cytoplasm. Capsid protein (CA) is the structural component of the virus-like particle (VLP), forming the shell that encapsulates the retrotransposons dimeric RNA genome. The particles are assembled from trimer-clustered units and there are holes in the capsid shells that allow for the diffusion of macromolecules. CA also has nucleocapsid-like chaperone activity, promoting primer tRNA(i)-Met annealing to the multipartite primer-binding site (PBS), dimerization of Ty1 RNA and initiation of reverse transcription. This chain is Transposon Ty1-ML1 Gag polyprotein (TY1A-ML1), found in Saccharomyces cerevisiae (strain ATCC 204508 / S288c) (Baker's yeast).